A 150-amino-acid polypeptide reads, in one-letter code: Con-Ins Im1 (150 aa).

A signal peptide spans Met-1–Ala-25. 4 disulfide bridges follow: Cys-31-Cys-133, Cys-46-Cys-136, Cys-58-Cys-149, and Cys-135-Cys-140. Positions Gly-64–Pro-111 are cleaved as a propeptide — c peptide. Position 144 is a 4-carboxyglutamate; partial (Glu-144).

Belongs to the insulin family. As to quaternary structure, heterodimer of A and B chains; disulfide-linked. Expressed by the venom gland.

The protein resides in the secreted. This venom insulin facilitates prey capture by rapidly inducing hypoglycemic shock. Intraperitoneal injection of this peptide into zebrafish lowers blood glucose with the same potency than human insulin. In vivo, when applied to water, this peptide reduces overall locomotor activity of zebrafish larvae, observed as a significant decrease in the percentage of time spent swimming and movement frequency. The chain is Con-Ins Im1 from Conus imperialis (Imperial cone).